The sequence spans 230 residues: Voltage-gated hydrogen channel 1 (230 aa).

At M1–K58 the chain is on the cytoplasmic side. The chain crosses the membrane as a helical span at residues F59–L79. Residues L80–I96 are Extracellular-facing. The chain crosses the membrane as a helical span at residues F97–F119. Residues R120–K127 are Cytoplasmic-facing. Residues F128 to S148 traverse the membrane as a helical segment. Residues R149–A155 lie on the Extracellular side of the membrane. Residues V156–V176 form a helical membrane-spanning segment. The stretch at S177–V226 forms a coiled coil. At S177–S230 the chain is on the cytoplasmic side.

The protein belongs to the hydrogen channel family. Homodimer.

The protein resides in the membrane. It is found in the cell membrane. Its function is as follows. Mediates the voltage-dependent proton permeability of excitable membranes. Forms a proton-selective channel through which protons may pass in accordance with their electrochemical gradient. The polypeptide is Voltage-gated hydrogen channel 1 (hvcn1) (Xenopus tropicalis (Western clawed frog)).